Consider the following 393-residue polypeptide: Geranylgeranyl pyrophosphate synthase 2 (393 aa).

Isopentenyl diphosphate-binding residues include lysine 109, arginine 112, and histidine 141. Mg(2+) is bound by residues aspartate 148 and aspartate 152. Arginine 157 provides a ligand contact to dimethylallyl diphosphate. Arginine 158 serves as a coordination point for isopentenyl diphosphate. The dimethylallyl diphosphate site is built by lysine 235, threonine 236, and glutamine 275. Aspartate 278 contacts Mg(2+). Positions 282, 292, and 302 each coordinate dimethylallyl diphosphate.

Belongs to the FPP/GGPP synthase family. Mg(2+) serves as cofactor.

The enzyme catalyses isopentenyl diphosphate + dimethylallyl diphosphate = (2E)-geranyl diphosphate + diphosphate. It catalyses the reaction isopentenyl diphosphate + (2E)-geranyl diphosphate = (2E,6E)-farnesyl diphosphate + diphosphate. The catalysed reaction is isopentenyl diphosphate + (2E,6E)-farnesyl diphosphate = (2E,6E,10E)-geranylgeranyl diphosphate + diphosphate. It functions in the pathway plant hormone biosynthesis; gibberellin biosynthesis. In terms of biological role, geranylgeranyl pyrophosphate synthase; part of the gene cluster that mediates the biosynthesis of gibberellins (GAs), diterpenoids that may provide a selective advantage during infection of the preferred host plant, rice. Gibberellins (GAs) are diterpenoids and are synthesized via the mevalonate pathway. Biosynthesis of the major metabolite GA3 (gibberellic acid) from geranylgeranyl diphosphate (GGPP) requires 13 steps. The GGPP produced by the geranylgeranyl diphosphate synthase GGS2 is converted to ent-kaurene via ent-copalyldiphosphate in a two-step cyclization reaction performed by the bifunctional ent-copalyl diphosphate synthase/ent-kaurene synthase enzyme (CPS/KS). Ent-Kaurene is metabolized to GAs by a series of oxidation reactions catalyzed by cytochrome P450 monooxygenases. Cytochrome P450 monooxygenase P450-4 is an ent-kaurene oxidase that catalyzes the three oxidation steps between ent-kaurene and ent-kaurenoic acid. The highly multifunctional cytochrome P450 monooxygenase P450-1 then catalyzes four steps involving oxidation at two carbon atoms, in the main pathway from ent-kaurenoic acid to GA14 via GA12-aldehyde as well as producing kaurenolides and fujenoic acids as by-products. The cytochrome P450 monooxygenase P450-2 then converts GA14 to GA4 by removal of C-20. GA4 is further converted to GA7 by the GA4 desaturase DES via 1,2-desaturation before cytochrome P450 monooxygenase P450-3, a 13-hydroxylase, hydroxylates GA7 to GA3, the final product of the GA-biosynthetic pathway. This Gibberella fujikuroi (strain CBS 195.34 / IMI 58289 / NRRL A-6831) (Bakanae and foot rot disease fungus) protein is Geranylgeranyl pyrophosphate synthase 2.